A 256-amino-acid polypeptide reads, in one-letter code: Enolase-phosphatase E1 (256 aa).

2 residues coordinate Mg(2+): aspartate 14 and glutamate 16. Substrate-binding positions include 142–143 and lysine 176; that span reads SS. Residue aspartate 201 participates in Mg(2+) binding.

The protein belongs to the HAD-like hydrolase superfamily. MasA/MtnC family. In terms of assembly, monomer. The cofactor is Mg(2+).

Its subcellular location is the cytoplasm. The protein localises to the nucleus. It carries out the reaction 5-methylsulfanyl-2,3-dioxopentyl phosphate + H2O = 1,2-dihydroxy-5-(methylsulfanyl)pent-1-en-3-one + phosphate. It participates in amino-acid biosynthesis; L-methionine biosynthesis via salvage pathway; L-methionine from S-methyl-5-thio-alpha-D-ribose 1-phosphate: step 3/6. Its pathway is amino-acid biosynthesis; L-methionine biosynthesis via salvage pathway; L-methionine from S-methyl-5-thio-alpha-D-ribose 1-phosphate: step 4/6. In terms of biological role, bifunctional enzyme that catalyzes the enolization of 2,3-diketo-5-methylthiopentyl-1-phosphate (DK-MTP-1-P) into the intermediate 2-hydroxy-3-keto-5-methylthiopentenyl-1-phosphate (HK-MTPenyl-1-P), which is then dephosphorylated to form the acireductone 1,2-dihydroxy-3-keto-5-methylthiopentene (DHK-MTPene). This is Enolase-phosphatase E1 from Drosophila sechellia (Fruit fly).